The chain runs to 319 residues: Acetyl-coenzyme A carboxylase carboxyl transferase subunit beta (319 aa).

The CoA carboxyltransferase N-terminal domain occupies 24–293 (LWIKCPDTGQ…MIEQEPEPSA (270 aa)). Residues 282 to 319 (PEMIEQEPEPSAPVPPDEPDEPAATQEAPPAAPAAPPA) form a disordered region.

The protein belongs to the AccD/PCCB family. In terms of assembly, acetyl-CoA carboxylase is a heterohexamer composed of biotin carboxyl carrier protein (AccB), biotin carboxylase (AccC) and two subunits each of ACCase subunit alpha (AccA) and ACCase subunit beta (AccD).

Its subcellular location is the cytoplasm. The enzyme catalyses N(6)-carboxybiotinyl-L-lysyl-[protein] + acetyl-CoA = N(6)-biotinyl-L-lysyl-[protein] + malonyl-CoA. Its pathway is lipid metabolism; malonyl-CoA biosynthesis; malonyl-CoA from acetyl-CoA: step 1/1. Its function is as follows. Component of the acetyl coenzyme A carboxylase (ACC) complex. Biotin carboxylase (BC) catalyzes the carboxylation of biotin on its carrier protein (BCCP) and then the CO(2) group is transferred by the transcarboxylase to acetyl-CoA to form malonyl-CoA. This is Acetyl-coenzyme A carboxylase carboxyl transferase subunit beta from Nitrobacter winogradskyi (strain ATCC 25391 / DSM 10237 / CIP 104748 / NCIMB 11846 / Nb-255).